The sequence spans 148 residues: Large ribosomal subunit protein bL9 (148 aa).

It belongs to the bacterial ribosomal protein bL9 family.

Binds to the 23S rRNA. The sequence is that of Large ribosomal subunit protein bL9 from Thermus thermophilus.